The chain runs to 2149 residues: Polyketide synthase 1 (2149 aa).

The N-terminal acylcarrier protein transacylase domain (SAT) stretch occupies residues 19-261 (FIFGDQSSCN…TRLAVHAPYH (243 aa)). The region spanning 394–829 (ESKIAIIGMS…GGNTALLVED (436 aa)) is the Ketosynthase family 3 (KS3) domain. Catalysis depends on for beta-ketoacyl synthase activity residues Cys-566, His-701, and His-745. The tract at residues 929–1233 (AFVFSGQGSQ…PSLMRNKDGW (305 aa)) is malonyl-CoA:ACP transacylase (MAT) domain. Ser-1018 (for acyl/malonyl transferase activity) is an active-site residue. The tract at residues 1310–1624 (TASVHRIVHE…RKVLNTAMPP (315 aa)) is product template (PT) domain. The interval 1314-1447 (HRIVHESVDK…SSLHFERPKV (134 aa)) is N-terminal hotdog fold. One can recognise a PKS/mFAS DH domain in the interval 1314-1619 (HRIVHESVDK…FQGIPRKVLN (306 aa)). The Proton acceptor; for dehydratase activity role is filled by His-1346. Residues 1474 to 1619 (LNSRMSSGVI…FQGIPRKVLN (146 aa)) form a C-terminal hotdog fold region. Catalysis depends on Asp-1533, which acts as the Proton donor; for dehydratase activity. A disordered region spans residues 1619 to 1657 (NTAMPPPKSQNEAPVRSAPAKPAAKPPKSASSEHSGHFA). Low complexity predominate over residues 1635-1650 (SAPAKPAAKPPKSASS). The region spanning 1678 to 1752 (RNPMLAVFKI…DLATHLGLDT (75 aa)) is the Carrier 1 domain. Position 1712 is an O-(pantetheine 4'-phosphoryl)serine (Ser-1712). A compositionally biased stretch (low complexity) spans 1755–1790 (SDQSSGQSSSSGGLSPRSDSIGEITSSATTPPSLSP). The tract at residues 1755–1796 (SDQSSGQSSSSGGLSPRSDSIGEITSSATTPPSLSPRGSVSG) is disordered. One can recognise a Carrier 2 domain in the interval 1793-1870 (SVSGSQCKDV…SFKHMFQQGH (78 aa)). Ser-1830 is modified (O-(pantetheine 4'-phosphoryl)serine). A thioesterase (TE) domain region spans residues 1882–2147 (LKQYRATSTL…ERVAAFIRST (266 aa)). Residue Ser-1973 is the For thioesterase activity of the active site.

In terms of biological role, polyketide synthase; part of the Pks1 gene cluster that mediates the biosynthesis of an anthraquinone derivative pigment that contributes to conidial pigmentation that provides protection from UV radiation, heat and cold stress. The polyketide synthase Pks1 produces 1-acetyl-2,4,6,8-tetrahydroxy-9,10-anthraquinone though condensation of acetyl-CoA with malonyl-CoA. The dehydratase EthD and the laccase Mlac1 further convert the anthraquinone derivative into the final conidial pigment. The polypeptide is Polyketide synthase 1 (Metarhizium majus (strain ARSEF 297)).